We begin with the raw amino-acid sequence, 59 residues long: Protein SspF (59 aa).

It belongs to the alpha/beta-type SASP family.

In terms of biological role, may play some important role in either sporulation or the dormant spore. This chain is Protein SspF (sspF), found in Bacillus cereus (strain ATCC 14579 / DSM 31 / CCUG 7414 / JCM 2152 / NBRC 15305 / NCIMB 9373 / NCTC 2599 / NRRL B-3711).